A 1131-amino-acid chain; its full sequence is Kinesin-like protein CG14535 (1131 aa).

Polar residues predominate over residues 1 to 11 (MATTSTSNMSR). Residues 1–25 (MATTSTSNMSRNGGFCGALQRAPPP) form a disordered region. Positions 44 to 396 (KVKVMLRVAD…IQIASRIHRL (353 aa)) constitute a Kinesin motor domain. Disordered regions lie at residues 472-494 (ALKG…MMMK), 693-753 (DLPD…SRDI), 905-926 (PAYR…QGSL), and 1016-1072 (TSSE…QRHR). Residues 483–494 (SKSASNSPMMMK) show a composition bias toward low complexity. A compositionally biased stretch (polar residues) spans 1016–1032 (TSSEAYDSGHDSNSTPR).

Belongs to the TRAFAC class myosin-kinesin ATPase superfamily. Kinesin family. KIF26 subfamily.

It is found in the cytoplasm. Its subcellular location is the cytoskeleton. The sequence is that of Kinesin-like protein CG14535 from Drosophila melanogaster (Fruit fly).